Reading from the N-terminus, the 127-residue chain is Holo-[acyl-carrier-protein] synthase (127 aa).

Asp9 and Glu58 together coordinate Mg(2+).

It belongs to the P-Pant transferase superfamily. AcpS family. Requires Mg(2+) as cofactor.

It is found in the cytoplasm. It catalyses the reaction apo-[ACP] + CoA = holo-[ACP] + adenosine 3',5'-bisphosphate + H(+). Functionally, transfers the 4'-phosphopantetheine moiety from coenzyme A to a Ser of acyl-carrier-protein. The polypeptide is Holo-[acyl-carrier-protein] synthase (Shewanella baltica (strain OS155 / ATCC BAA-1091)).